A 389-amino-acid polypeptide reads, in one-letter code: Multidrug resistance protein 1 (389 aa).

The next 11 membrane-spanning stretches (helical) occupy residues 6 to 26 (ITLTILLTNLFIAFLGIGLVI), 42 to 62 (AVGYMVACFAITQLIVSPIAG), 71 to 91 (KIMIVIGLLFFSVSEFLFGIG), 102 to 122 (MLGGISAAFIMPGVTAFIADI), 134 to 154 (YMSAAISTGFIIGPGIGGFLA), 160 to 180 (LPFFFAAAFALLAAILSILTL), 202 to 222 (IFAPMYFIAFLIILISSFGLA), 243 to 263 (IAIMITGGAIVGAITQVVLFD), 286 to 306 (VFLLTTVHSYVAILLVTVTVF), 336 to 356 (SMFTSIGNVFGPIIGGMLFDI), and 358 to 378 (VNYPFYFATVTLAIGIALTIA).

It belongs to the major facilitator superfamily. TCR/Tet family.

It is found in the cell membrane. In terms of biological role, energy-dependent efflux pump responsible for decreased drug accumulation in multi-drug-resistant cells. Probably uses a transmembrane proton gradient as the energy source. Causes the efflux of a variety of toxic substances, including such structurally diverse compounds as ethidium bromide, rhodamine and acridine dyes, tetraphenylphosphonium, puromycin, chloramphenicol, doxorubicin, and fluoroquinolone antibiotics. In Bacillus subtilis (strain 168), this protein is Multidrug resistance protein 1 (bmr).